Reading from the N-terminus, the 160-residue chain is Sulfur-rich protein (160 aa).

A run of 2 helical transmembrane segments spans residues 63–83 (ITMIVLGIILLIAGLALTFVL) and 92–112 (FLFLIPAVIGLVKLLATSVFM).

The protein localises to the membrane. This Chlamydia abortus (strain DSM 27085 / S26/3) (Chlamydophila abortus) protein is Sulfur-rich protein (srp).